Consider the following 165-residue polypeptide: Phosphopantetheine adenylyltransferase (165 aa).

Thr10 provides a ligand contact to substrate. ATP-binding positions include 10–11 and His18; that span reads TF. Positions 42, 75, and 89 each coordinate substrate. Residues 90-92, Glu100, and 125-131 contribute to the ATP site; these read GVR and YTYVAST.

It belongs to the bacterial CoaD family. In terms of assembly, homohexamer. Requires Mg(2+) as cofactor.

It is found in the cytoplasm. The enzyme catalyses (R)-4'-phosphopantetheine + ATP + H(+) = 3'-dephospho-CoA + diphosphate. It participates in cofactor biosynthesis; coenzyme A biosynthesis; CoA from (R)-pantothenate: step 4/5. Reversibly transfers an adenylyl group from ATP to 4'-phosphopantetheine, yielding dephospho-CoA (dPCoA) and pyrophosphate. This is Phosphopantetheine adenylyltransferase from Chlorobaculum tepidum (strain ATCC 49652 / DSM 12025 / NBRC 103806 / TLS) (Chlorobium tepidum).